Consider the following 547-residue polypeptide: Cdc42-interacting protein 4 (547 aa).

The segment at 1–117 (MDWGTELWDQ…EMKQERKMHF (117 aa)) is required for translocation to the plasma membrane in response to insulin, podosome formation and interaction with AKAP9 and microtubules. Residues 1–264 (MDWGTELWDQ…AAESVDAKND (264 aa)) enclose the F-BAR domain. A coiled-coil region spans residues 67–259 (FSQQQSFVQL…EGMKVAAESV (193 aa)). The segment at 293-483 (RVPSDSSLGT…YTEFDEDFEE (191 aa)) is interaction with CDC42. Residues 293-547 (RVPSDSSLGT…PTSYLRVTLN (255 aa)) form an interaction with PDE6G region. Positions 294-323 (VPSDSSLGTPDGRPELRAASSRSRAKRWPF) are disordered. Phosphoserine occurs at positions 296, 298, and 299. The stretch at 332-425 (TEDFSHLPPE…ESRVLSNRGD (94 aa)) forms a coiled coil. The 78-residue stretch at 337–414 (HLPPEQQRKR…VQKYEAWLAE (78 aa)) folds into the REM-1 domain. The interval 415–547 (AESRVLSNRG…PTSYLRVTLN (133 aa)) is required for interaction with FASLG and localization to lysosomes. The interval 420–485 (LSNRGDSLSR…EFDEDFEEPA (66 aa)) is disordered. Ser426 carries the phosphoserine modification. An interaction with DNM2 and WASL region spans residues 431-487 (TRPPDPPTTAPPDSSSSSNNSGSQDNKESSEEPPSEEGQDTPIYTEFDEDFEEPASP). Positions 441–451 (PPDSSSSSNNS) are enriched in low complexity. Positions 476 to 547 (EFDEDFEEPA…PTSYLRVTLN (72 aa)) are interaction with DNM1 and WASL. The required for podosome formation stretch occupies residues 484–547 (PASPIGQCVA…PTSYLRVTLN (64 aa)). An SH3 domain is found at 486 to 547 (SPIGQCVAIY…PTSYLRVTLN (62 aa)). The tract at residues 490 to 547 (QCVAIYHFEGSSEGTVSMSEGEDLSLMEEDKGDGWTRVRRKQGGEGYVPTSYLRVTLN) is interaction with WAS. An interaction with ARHGAP17, DAAM1, DIAPH1 and DIAPH2 region spans residues 492–547 (VAIYHFEGSSEGTVSMSEGEDLSLMEEDKGDGWTRVRRKQGGEGYVPTSYLRVTLN).

The protein belongs to the FNBP1 family. In terms of assembly, homodimerizes, the dimers can polymerize end-to-end to form filamentous structures. Interacts specifically with GTP-bound CDC42 and RHOQ. Interacts with AKAP9, ARHGAP17, DAAM1, DIAPH1, DIAPH2, DNM1, DNM2, FASLG/FASL, GAPVD1, LYN, microtubules, SRC, WAS/WASP and WASL/N-WASP. Interacts with the ligand binding domain of the thyroid receptor (TR) in the presence of thyroid hormone. May interact with CTNNB1 and HD/HTT. Interacts with PDE6G. In terms of tissue distribution, expressed in adrenal gland, aorta, brain, heart, kidney, liver, skeletal muscle and spleen.

It is found in the cytoplasm. The protein localises to the cytoskeleton. The protein resides in the cell cortex. Its subcellular location is the lysosome. It localises to the golgi apparatus. It is found in the cell membrane. The protein localises to the cell projection. The protein resides in the phagocytic cup. Functionally, required to coordinate membrane tubulation with reorganization of the actin cytoskeleton during endocytosis. Also acts as a link between CDC42 signaling and regulation of the actin cytoskeleton. Binds to lipids such as phosphatidylinositol 4,5-bisphosphate and phosphatidylserine and promotes membrane invagination and the formation of tubules. Also enhances actin polymerization in the vicinity of membrane tubules by recruiting WASL/N-WASP which in turn activates the Arp2/3 complex. Actin polymerization and dynamin may promote the fission of membrane tubules to form endocytic vesicles. Required for the formation of podosomes, actin-rich adhesion structures specific to monocyte-derived cells. Required for translocation of GLUT4 to the plasma membrane in response to insulin signaling. May be required for the lysosomal retention of FASLG/FASL. This is Cdc42-interacting protein 4 (Trip10) from Rattus norvegicus (Rat).